The following is a 390-amino-acid chain: Lipid-A-disaccharide synthase (390 aa).

This sequence belongs to the LpxB family.

It catalyses the reaction a lipid X + a UDP-2-N,3-O-bis[(3R)-3-hydroxyacyl]-alpha-D-glucosamine = a lipid A disaccharide + UDP + H(+). It functions in the pathway bacterial outer membrane biogenesis; LPS lipid A biosynthesis. In terms of biological role, condensation of UDP-2,3-diacylglucosamine and 2,3-diacylglucosamine-1-phosphate to form lipid A disaccharide, a precursor of lipid A, a phosphorylated glycolipid that anchors the lipopolysaccharide to the outer membrane of the cell. The sequence is that of Lipid-A-disaccharide synthase from Neisseria gonorrhoeae (strain ATCC 700825 / FA 1090).